Reading from the N-terminus, the 273-residue chain is Putative pyruvate, phosphate dikinase regulatory protein (273 aa).

149-156 (GPSRTSKT) lines the ADP pocket.

This sequence belongs to the pyruvate, phosphate/water dikinase regulatory protein family. PDRP subfamily.

The catalysed reaction is N(tele)-phospho-L-histidyl/L-threonyl-[pyruvate, phosphate dikinase] + ADP = N(tele)-phospho-L-histidyl/O-phospho-L-threonyl-[pyruvate, phosphate dikinase] + AMP + H(+). It catalyses the reaction N(tele)-phospho-L-histidyl/O-phospho-L-threonyl-[pyruvate, phosphate dikinase] + phosphate + H(+) = N(tele)-phospho-L-histidyl/L-threonyl-[pyruvate, phosphate dikinase] + diphosphate. In terms of biological role, bifunctional serine/threonine kinase and phosphorylase involved in the regulation of the pyruvate, phosphate dikinase (PPDK) by catalyzing its phosphorylation/dephosphorylation. The sequence is that of Putative pyruvate, phosphate dikinase regulatory protein from Rickettsia canadensis (strain McKiel).